The following is a 490-amino-acid chain: Ribulose bisphosphate carboxylase large chain (490 aa).

2 residues coordinate substrate: asparagine 127 and threonine 177. Lysine 179 functions as the Proton acceptor in the catalytic mechanism. Residue lysine 181 participates in substrate binding. Mg(2+) contacts are provided by lysine 205, aspartate 207, and glutamate 208. N6-carboxylysine is present on lysine 205. Histidine 297 functions as the Proton acceptor in the catalytic mechanism. Residues arginine 298, histidine 330, and serine 382 each coordinate substrate.

It belongs to the RuBisCO large chain family. Type I subfamily. In terms of assembly, heterohexadecamer of 8 large chains and 8 small chains. It depends on Mg(2+) as a cofactor.

It localises to the plastid. It is found in the chloroplast. The enzyme catalyses 2 (2R)-3-phosphoglycerate + 2 H(+) = D-ribulose 1,5-bisphosphate + CO2 + H2O. It catalyses the reaction D-ribulose 1,5-bisphosphate + O2 = 2-phosphoglycolate + (2R)-3-phosphoglycerate + 2 H(+). Functionally, ruBisCO catalyzes two reactions: the carboxylation of D-ribulose 1,5-bisphosphate, the primary event in carbon dioxide fixation, as well as the oxidative fragmentation of the pentose substrate in the photorespiration process. Both reactions occur simultaneously and in competition at the same active site. This is Ribulose bisphosphate carboxylase large chain from Trieres chinensis (Marine centric diatom).